The primary structure comprises 423 residues: N-acylneuraminate cytidylyltransferase B (423 aa).

Residues Arg-30, Asn-40, Arg-88, Ser-97, Ser-99, and Gln-120 each contribute to the substrate site. The active site involves Arg-178.

This sequence belongs to the CMP-NeuNAc synthase family. Homotetramer.

It is found in the cytoplasm. The catalysed reaction is an N-acylneuraminate + CTP = a CMP-N-acyl-beta-neuraminate + diphosphate. The protein operates within amino-sugar metabolism; N-acetylneuraminate metabolism. Catalyzes the activation of 2-keto-3-deoxy-D-glycero-D-galacto-nononic acid (KDN) to cytidine 5'-monophosphate 2-keto-3-deoxy-D-glycero-D-galacto-nononic acid (CMP-KDN), a substrate required for the addition of sialic acid. Also has weak activity towards N-acetylneuraminic acid (NeuNAc) and N-glycolylneuraminic acid (Neu5Gc). The chain is N-acylneuraminate cytidylyltransferase B from Danio rerio (Zebrafish).